The sequence spans 157 residues: Putative 4-hydroxy-4-methyl-2-oxoglutarate aldolase (157 aa).

Substrate is bound by residues 78–81 (GDVI) and arginine 100. Aspartate 101 contacts a divalent metal cation.

It belongs to the class II aldolase/RraA-like family. Homotrimer. A divalent metal cation serves as cofactor.

The enzyme catalyses 4-hydroxy-4-methyl-2-oxoglutarate = 2 pyruvate. It carries out the reaction oxaloacetate + H(+) = pyruvate + CO2. Functionally, catalyzes the aldol cleavage of 4-hydroxy-4-methyl-2-oxoglutarate (HMG) into 2 molecules of pyruvate. Also contains a secondary oxaloacetate (OAA) decarboxylase activity due to the common pyruvate enolate transition state formed following C-C bond cleavage in the retro-aldol and decarboxylation reactions. The protein is Putative 4-hydroxy-4-methyl-2-oxoglutarate aldolase of Mycobacterium leprae (strain Br4923).